We begin with the raw amino-acid sequence, 525 residues long: MNDILKEIAKRRTFAIISHPDAGKTTITEKMLLFGNAIKTAGTVKAKKSGVHATSDWMEMEKERGISITTSVMQFPYNGKVVNLLDTPGHEDFSEDTYRTLTAVDSALMVVDAVKGVEDRTIKLMNVCRLRDTPIVTFMNKFDRDTRDPLELLDEVEDIMKIKCAPMNWPIGMGKFFKGVYDLYNDEVTLFEGGHGHEIHPYKKIKGLANAKDQIGADLFDDLEMEIDLVRGASHEFDQEAFLKGELTPVYFGTALANFGVKEMMDGFTTYAPEPQPRETNERLVNTDENKLTGFVFKIQANMDDKHRDRIAFFRICSGKYEKGMKIYHERTGKMMQVSKALTFMAGEREQVEEGYAGDIIGLHNHGSIQIGDSFTQGEKLKFKGIPNFAPEIFKRVKLNDPLKMKALQKGLVQLSEEGATQVFKPMISNDLVLGAVGVLQFDVVAQRLASEYNVKCSYEGVNVSLARWIFCDDEKKLNDFKKKYEVNLSYDGAGYLTYLAPTGVNLQLAQDKNPDIIFSATREH.

Residues Ala-9–Gln-276 form the tr-type G domain. GTP-binding positions include Ser-18 to Thr-25, Asp-86 to His-90, and Asn-140 to Asp-143.

Belongs to the TRAFAC class translation factor GTPase superfamily. Classic translation factor GTPase family. PrfC subfamily.

Its subcellular location is the cytoplasm. Increases the formation of ribosomal termination complexes and stimulates activities of RF-1 and RF-2. It binds guanine nucleotides and has strong preference for UGA stop codons. It may interact directly with the ribosome. The stimulation of RF-1 and RF-2 is significantly reduced by GTP and GDP, but not by GMP. This chain is Peptide chain release factor 3, found in Francisella philomiragia subsp. philomiragia (strain ATCC 25017 / CCUG 19701 / FSC 153 / O#319-036).